Here is a 484-residue protein sequence, read N- to C-terminus: 1,4-beta-D-glucan cellobiohydrolase CEL6A (484 aa).

The N-terminal stretch at M1–A17 is a signal peptide. Residues N26–L62 enclose the CBM1 domain. Cystine bridges form between C34–C51 and C45–C61. Residues T68 to N98 form a disordered region. Residues W171 and D173 each coordinate substrate. N175 is a glycosylation site (N-linked (GlcNAc...) asparagine). Positions Y208–G230 are substrate binding loop 1. Catalysis depends on D260, which acts as the Proton donor. Residues H305, W308, N344, W405, K433, and E437 each coordinate substrate. The segment at W431 to F469 is substrate binding loop 2. The active-site Proton acceptor is the D439.

The protein belongs to the glycosyl hydrolase 6 (cellulase B) family. In terms of assembly, monomer. Post-translationally, both N- and O-glycosylated.

The protein localises to the secreted. It catalyses the reaction Hydrolysis of (1-&gt;4)-beta-D-glucosidic linkages in cellulose and cellotetraose, releasing cellobiose from the non-reducing ends of the chains.. In terms of biological role, exoglucanase that plays an important function in biomass degradation by catalyzing the hydrolysis of the non-reducing end beta-1,4-glucosidic linkages in cellulose and cellotetraose to release cellobiose. Hydrolyzes crystalline and amorphous cellulose but is inactive on hydroxyethyl cellulose, mannan, galactomannan, xyloglucan, arabinoxylan, arabinan, xylan, and pectin. This is 1,4-beta-D-glucan cellobiohydrolase CEL6A from Podospora anserina (strain S / ATCC MYA-4624 / DSM 980 / FGSC 10383) (Pleurage anserina).